Reading from the N-terminus, the 165-residue chain is Nucleotide-binding protein P9215_05621 (165 aa).

It belongs to the YajQ family.

Its function is as follows. Nucleotide-binding protein. In Prochlorococcus marinus (strain MIT 9215), this protein is Nucleotide-binding protein P9215_05621.